A 580-amino-acid chain; its full sequence is Viral transcription factor IE2 (580 aa).

Residues 1-11 (MESSAKRKMDP) are compositionally biased toward basic and acidic residues. Disordered stretches follow at residues 1-30 (MESSAKRKMDPDNPDEGPSSKVPRPETPVT) and 99-161 (DSSS…VIIK). Residues 99-133 (DSSSTGPTLTTHSCSVSSAPLNKPTPTSVAVTNTP) are compositionally biased toward polar residues. Residues Lys-175 and Lys-180 each participate in a glycyl lysine isopeptide (Lys-Gly) (interchain with G-Cter in SUMO) cross-link. An SUMO-interacting motif 1/SIM1 motif is present at residues 199–202 (CIVI). Positions 200-208 (IVISDSEEE) are non-covalent SUMO1 binding region (SIM). Ser-203 and Ser-205 each carry phosphoserine. A disordered region spans residues 206-336 (EEEQGEEVET…SKRISELDNE (131 aa)). Low complexity-rich tracts occupy residues 216–236 (RGATASSPSTGSGTPRVTSPT), 259–271 (SSSSSSSCSSASD), and 302–317 (AASSSLLSCGHQSSGG). Residues 410-413 (IQII) carry the SUMO-interacting motif 1/SIM2 motif. The short motif at 501-504 (VDLL) is the SUMO-interacting motif 1/SIM3 element.

It belongs to the HHV-5 IE2 protein family. As to quaternary structure, interacts with host SUMO-modified form of TATA-binding protein (TBP)-associated factor 12/TAF12 in a SIM-dependent manner; this interaction increases the transactivation activity of IE2. Interacts with host CHAF1A. Interacts with several components of the host transcriptional machinery including TBP, TF2B and CREB1. Interacts with host DNA replication licensing factor MCM3. Interacts with host PLSCR1; this interaction inhibits IE2 transactivating activity. In terms of processing, phosphorylated by host CK2 at Ser-203 and Ser-205; leading to enhanced SUMOylation. Post-translationally, SUMOylated; SUMOylation is enhanced when IE2 is phosphorylated by host CK2. The sumoylation is necessary for efficient replication of the virus and thus for the function of this viral transcription factor.

The protein localises to the host nucleus. In terms of biological role, stimulates viral early and late gene expression and thus play a crucial role in the regulation of productive infection. Selectively drives host RNA Pol II transcription initiation at a subset of viral early-late and late promoters without substantially affecting Pol II transcription of expressed host genes. Mechanistically, forms a repressive complex at the major immediate-early promoter region involving direct association with host nucleosomes and TBP. Concerning activation, stimulates transcription by binding nearby, but not within, core promoter regions. In addition, activates quiescent cells to reenter the cell cycle and up-regulates several E2F-responsive genes, which are responsible for pushing the cell into S phase. In S-phase, inhibits cellular DNA synthesis and blocks further cell cycle progression. The chain is Viral transcription factor IE2 (UL122) from Homo sapiens (Human).